The following is a 293-amino-acid chain: 4-hydroxy-tetrahydrodipicolinate synthase (293 aa).

Residue Thr47 coordinates pyruvate. The active-site Proton donor/acceptor is Tyr135. Lys163 (schiff-base intermediate with substrate) is an active-site residue. Val205 contributes to the pyruvate binding site.

Belongs to the DapA family. In terms of assembly, homotetramer; dimer of dimers.

The protein localises to the cytoplasm. It catalyses the reaction L-aspartate 4-semialdehyde + pyruvate = (2S,4S)-4-hydroxy-2,3,4,5-tetrahydrodipicolinate + H2O + H(+). Its pathway is amino-acid biosynthesis; L-lysine biosynthesis via DAP pathway; (S)-tetrahydrodipicolinate from L-aspartate: step 3/4. Functionally, catalyzes the condensation of (S)-aspartate-beta-semialdehyde [(S)-ASA] and pyruvate to 4-hydroxy-tetrahydrodipicolinate (HTPA). This is 4-hydroxy-tetrahydrodipicolinate synthase from Leptothrix cholodnii (strain ATCC 51168 / LMG 8142 / SP-6) (Leptothrix discophora (strain SP-6)).